The following is a 282-amino-acid chain: Pantothenate synthetase (282 aa).

Position 30–37 (Met30–His37) interacts with ATP. Residue His37 is the Proton donor of the active site. A (R)-pantoate-binding site is contributed by Gln61. Gln61 lines the beta-alanine pocket. Residue Gly149–Asp152 coordinates ATP. Gln155 serves as a coordination point for (R)-pantoate. ATP contacts are provided by residues Leu178 and Met186–Arg189.

The protein belongs to the pantothenate synthetase family. As to quaternary structure, homodimer.

The protein localises to the cytoplasm. The catalysed reaction is (R)-pantoate + beta-alanine + ATP = (R)-pantothenate + AMP + diphosphate + H(+). It participates in cofactor biosynthesis; (R)-pantothenate biosynthesis; (R)-pantothenate from (R)-pantoate and beta-alanine: step 1/1. Catalyzes the condensation of pantoate with beta-alanine in an ATP-dependent reaction via a pantoyl-adenylate intermediate. The sequence is that of Pantothenate synthetase from Flavobacterium psychrophilum (strain ATCC 49511 / DSM 21280 / CIP 103535 / JIP02/86).